A 345-amino-acid polypeptide reads, in one-letter code: UDP-3-O-acylglucosamine N-acyltransferase (345 aa).

Catalysis depends on His-253, which acts as the Proton acceptor.

The protein belongs to the transferase hexapeptide repeat family. LpxD subfamily. Homotrimer.

The enzyme catalyses a UDP-3-O-[(3R)-3-hydroxyacyl]-alpha-D-glucosamine + a (3R)-hydroxyacyl-[ACP] = a UDP-2-N,3-O-bis[(3R)-3-hydroxyacyl]-alpha-D-glucosamine + holo-[ACP] + H(+). It functions in the pathway bacterial outer membrane biogenesis; LPS lipid A biosynthesis. Catalyzes the N-acylation of UDP-3-O-acylglucosamine using 3-hydroxyacyl-ACP as the acyl donor. Is involved in the biosynthesis of lipid A, a phosphorylated glycolipid that anchors the lipopolysaccharide to the outer membrane of the cell. The sequence is that of UDP-3-O-acylglucosamine N-acyltransferase from Rickettsia massiliae (strain Mtu5).